Consider the following 320-residue polypeptide: Olfactory receptor 51E2 (320 aa).

The Extracellular segment spans residues M1–F24. N5 is a glycosylation site (N-linked (GlcNAc...) asparagine). The chain crosses the membrane as a helical span at residues W25–V45. At F46–S53 the chain is on the cytoplasmic side. The helical transmembrane segment at L54 to T74 threads the bilayer. The Extracellular segment spans residues S75–T98. C96 and C178 form a disulfide bridge. A helical membrane pass occupies residues Q99–F119. Topologically, residues D120–T138 are cytoplasmic. A helical membrane pass occupies residues V139–P159. The Extracellular segment spans residues L160–V195. A helical transmembrane segment spans residues V196–S216. Residues Y217–A236 are Cytoplasmic-facing. The helical transmembrane segment at F237–L257 threads the bilayer. Over S258–R272 the chain is Extracellular. A helical membrane pass occupies residues V273–A293. At K294–K320 the chain is on the cytoplasmic side.

The protein belongs to the G-protein coupled receptor 1 family. In terms of tissue distribution, highly expressed in the prostate. Also expressed in spleen, liver, olfactory epithelium, retinal pigment epithelium and medulla oblongata. In the retinal pigment epithelium expression is restricted to the pigment cells and choroid (at protein level). Expressed in epidermal melanocytes (at protein level).

It is found in the cell membrane. Its subcellular location is the early endosome membrane. Its function is as follows. Olfactory receptor. Activated by the odorant, beta-ionone, a synthetic terpenoid. The activity of this receptor is probably mediated by G-proteins leading to the elevation of intracellular Ca(2+), cAMP and activation of the protein kinases PKA and MAPK3/MAPK1. Stimulation of OR51E2 by beta-ionone affects melanocyte proliferation, differentiation, and melanogenesis. Activation of OR51E2 by beta-ionone increases proliferation and migration of primary retinal pigment epithelial (RPE) cells. Activated also by the short-chain fatty acids (SCFA) acetate and propionate. In response to SCFA, may positively regulate renin secretion and increase blood pressure. May also be activated by steroid hormones and regulate cell proliferation. Activated by L-lactate in glomus cells. The sequence is that of Olfactory receptor 51E2 from Homo sapiens (Human).